We begin with the raw amino-acid sequence, 336 residues long: MAELRLGYKASAEQFAPRELVELGVAAEAHGMDSATVSDHFQPWRHQGGHASFSLSWMTAVGERTNRILLGTSVLTPTFRYNPAVIGQAFATMGCLYPNRVFLGVGTGEALNEVATGYQGAWPEFKERFARLRESVRLMRELWRGDRVDFDGDYYQLKGASIYDVPEGGVPIYIAAGGPEVAKYAGRAGEGFVCTSGKGEELYTEKLIPAVLEGAAVAGRDADDIDKMIEIKMSYDPDPEQALSNIRFWAPLSLAAEQKHSIDDPIEMEKVADALPIEQVAKRWIVVSDPDEAVARVGQYVTWGLNHLVFHAPGHNQRRFLELFEKDLAPRLRRLG.

Asp-39 provides a ligand contact to coenzyme F420-(gamma-Glu)n. His-40 acts as the Proton donor in catalysis. Coenzyme F420-(gamma-Glu)n is bound by residues Thr-76 and 107–108; that span reads TG. The active-site Proton acceptor is Glu-109. Residues Asn-112, 177–178, and 180–181 contribute to the coenzyme F420-(gamma-Glu)n site; these read GG and EV. Substrate contacts are provided by Thr-195, Lys-198, Lys-259, and Arg-283.

The protein belongs to the F420-dependent glucose-6-phosphate dehydrogenase family. In terms of assembly, homodimer.

The catalysed reaction is oxidized coenzyme F420-(gamma-L-Glu)(n) + D-glucose 6-phosphate + H(+) = 6-phospho-D-glucono-1,5-lactone + reduced coenzyme F420-(gamma-L-Glu)(n). Its function is as follows. Catalyzes the coenzyme F420-dependent oxidation of glucose 6-phosphate (G6P) to 6-phosphogluconolactone. Appears to have a role in resistance to oxidative stress, via its consumption of G6P that serves as a source of reducing power to combat oxidative stress in mycobacteria. The polypeptide is F420-dependent glucose-6-phosphate dehydrogenase (Mycobacterium leprae (strain Br4923)).